Reading from the N-terminus, the 463-residue chain is ATP synthase subunit beta (463 aa).

152–159 (GGAGVGKT) lines the ATP pocket.

The protein belongs to the ATPase alpha/beta chains family. As to quaternary structure, F-type ATPases have 2 components, CF(1) - the catalytic core - and CF(0) - the membrane proton channel. CF(1) has five subunits: alpha(3), beta(3), gamma(1), delta(1), epsilon(1). CF(0) has three main subunits: a(1), b(2) and c(9-12). The alpha and beta chains form an alternating ring which encloses part of the gamma chain. CF(1) is attached to CF(0) by a central stalk formed by the gamma and epsilon chains, while a peripheral stalk is formed by the delta and b chains.

Its subcellular location is the cell inner membrane. The enzyme catalyses ATP + H2O + 4 H(+)(in) = ADP + phosphate + 5 H(+)(out). Its function is as follows. Produces ATP from ADP in the presence of a proton gradient across the membrane. The catalytic sites are hosted primarily by the beta subunits. This chain is ATP synthase subunit beta, found in Shewanella denitrificans (strain OS217 / ATCC BAA-1090 / DSM 15013).